The primary structure comprises 322 residues: UV DNA damage endonuclease (322 aa).

It belongs to the uve1/UvsE family.

Component in a DNA repair pathway. Removal of UV LIGHT damaged nucleotides. Recognizes pyrimidine dimers and cleave a phosphodiester bond immediately 5' to the lesion. The chain is UV DNA damage endonuclease from Nostoc sp. (strain PCC 7120 / SAG 25.82 / UTEX 2576).